Here is a 229-residue protein sequence, read N- to C-terminus: Predicted GPI-anchored protein 19 (229 aa).

The N-terminal stretch at 1–20 (MFSTTSIVLWFTILLPVTLP) is a signal peptide. A disordered region spans residues 63–92 (DNEQVLRKSKKKKKTTSTGTPGNENTTDFA). A compositionally biased stretch (polar residues) spans 81–92 (GTPGNENTTDFA). N-linked (GlcNAc...) asparagine glycosylation is found at Asn-87, Asn-184, and Asn-189. Residue Gly-208 is the site of GPI-anchor amidated glycine attachment. The propeptide at 209-229 (FGSLIPYNSFYLYILLFCIIF) is removed in mature form.

The protein localises to the cell membrane. In terms of biological role, predicted GPI-anchored protein which may have a role during host infection. The sequence is that of Predicted GPI-anchored protein 19 (PGA19) from Candida albicans (strain SC5314 / ATCC MYA-2876) (Yeast).